Here is a 142-residue protein sequence, read N- to C-terminus: Transcriptional regulator MraZ (142 aa).

SpoVT-AbrB domains follow at residues 5 to 47 and 76 to 119; these read THSP…SERE and ASDE…DAQA.

It belongs to the MraZ family. Forms oligomers.

Its subcellular location is the cytoplasm. The protein localises to the nucleoid. This is Transcriptional regulator MraZ from Arthrobacter sp. (strain FB24).